The following is a 44-amino-acid chain: Photosystem I reaction center subunit IX (44 aa).

Residues Tyr-7 to Ile-27 form a helical membrane-spanning segment.

It belongs to the PsaJ family.

Its subcellular location is the plastid. It localises to the chloroplast thylakoid membrane. May help in the organization of the PsaE and PsaF subunits. This Barbarea verna (Land cress) protein is Photosystem I reaction center subunit IX.